A 95-amino-acid chain; its full sequence is MSVTTKDVAYIAELARLKFTDAEQERMTDELNMILHYVDKLNEVDTEGVEPLNTIHDQINVLRADVEHTPLSNEEALKNAPDRQDRFFKVPKVIG.

It belongs to the GatC family. As to quaternary structure, heterotrimer of A, B and C subunits.

The catalysed reaction is L-glutamyl-tRNA(Gln) + L-glutamine + ATP + H2O = L-glutaminyl-tRNA(Gln) + L-glutamate + ADP + phosphate + H(+). The enzyme catalyses L-aspartyl-tRNA(Asn) + L-glutamine + ATP + H2O = L-asparaginyl-tRNA(Asn) + L-glutamate + ADP + phosphate + 2 H(+). Allows the formation of correctly charged Asn-tRNA(Asn) or Gln-tRNA(Gln) through the transamidation of misacylated Asp-tRNA(Asn) or Glu-tRNA(Gln) in organisms which lack either or both of asparaginyl-tRNA or glutaminyl-tRNA synthetases. The reaction takes place in the presence of glutamine and ATP through an activated phospho-Asp-tRNA(Asn) or phospho-Glu-tRNA(Gln). The protein is Aspartyl/glutamyl-tRNA(Asn/Gln) amidotransferase subunit C of Chlorobaculum parvum (strain DSM 263 / NCIMB 8327) (Chlorobium vibrioforme subsp. thiosulfatophilum).